The following is a 460-amino-acid chain: NADH-quinone oxidoreductase subunit N (460 aa).

Helical transmembrane passes span 2-22 (LLPEITLTLTALLSQFFAVML), 28-48 (IVANITILLTILTIFIILKYS), 65-85 (ANIANYKAIILIFTIISMIIY), 104-124 (ILLSTVGIFVAISAQNFLLLF), 155-175 (FILGSLVSCLSLFGISFIYGF), 196-216 (LGLVIGVVLFLSSIFFKLSSA), 230-250 (PIASVTYFTAASKIGAVAILL), 263-283 (ISYNLIKIIALLSMIFGALGA), 292-312 (LMAYSTILNIGYVLIGVLLRT), 321-341 (LYMLIYAAASIGFFTCLIMLL), 363-383 (IAAAICIIMFSMIGIPPLAGF), 400-420 (LLAYFGIFTSVIAAFYYLKII), and 438-458 (YGLLLINFVVIGFLLFGSFII).

This sequence belongs to the complex I subunit 2 family. NDH-1 is composed of 14 different subunits. Subunits NuoA, H, J, K, L, M, N constitute the membrane sector of the complex.

The protein resides in the cell inner membrane. The enzyme catalyses a quinone + NADH + 5 H(+)(in) = a quinol + NAD(+) + 4 H(+)(out). Its function is as follows. NDH-1 shuttles electrons from NADH, via FMN and iron-sulfur (Fe-S) centers, to quinones in the respiratory chain. The immediate electron acceptor for the enzyme in this species is believed to be ubiquinone. Couples the redox reaction to proton translocation (for every two electrons transferred, four hydrogen ions are translocated across the cytoplasmic membrane), and thus conserves the redox energy in a proton gradient. The protein is NADH-quinone oxidoreductase subunit N of Rickettsia bellii (strain RML369-C).